Reading from the N-terminus, the 228-residue chain is MKDVKALKLMTLNDVLSQINGDMTLGIGTGSTMELLLPQMAQLIKERGYNITGVCTSNKIAFLAKELGIKICEINDVDHIDLAIDGADEVDPSLNIIKGGGGALFREKVIDEMASRFVVVVDETKIVQYLGETFKLPVEVDKFNWYQILRKIESYADIKVERRVNEDVAFITDNGNYILDCKLPKGIDPYKFHEYLIHLTGVFETGYFLDMADQVIVGTQEGVKILEK.

Substrate contacts are provided by residues Thr-29 to Thr-32, Asp-85 to Asp-88, and Lys-98 to Gly-101. Glu-107 acts as the Proton acceptor in catalysis. Residue Lys-125 coordinates substrate.

This sequence belongs to the ribose 5-phosphate isomerase family. As to quaternary structure, homodimer.

The catalysed reaction is aldehydo-D-ribose 5-phosphate = D-ribulose 5-phosphate. It participates in carbohydrate degradation; pentose phosphate pathway; D-ribose 5-phosphate from D-ribulose 5-phosphate (non-oxidative stage): step 1/1. Its function is as follows. Catalyzes the reversible conversion of ribose-5-phosphate to ribulose 5-phosphate. This is Ribose-5-phosphate isomerase A from Staphylococcus aureus (strain COL).